A 166-amino-acid polypeptide reads, in one-letter code: Large ribosomal subunit protein uL10 (166 aa).

The protein belongs to the universal ribosomal protein uL10 family. Part of the ribosomal stalk of the 50S ribosomal subunit. The N-terminus interacts with L11 and the large rRNA to form the base of the stalk. The C-terminus forms an elongated spine to which L12 dimers bind in a sequential fashion forming a multimeric L10(L12)X complex.

Functionally, forms part of the ribosomal stalk, playing a central role in the interaction of the ribosome with GTP-bound translation factors. The chain is Large ribosomal subunit protein uL10 from Aeromonas salmonicida (strain A449).